The sequence spans 213 residues: Uracil phosphoribosyltransferase (213 aa).

5-phospho-alpha-D-ribose 1-diphosphate contacts are provided by residues Arg78, Arg103, and 130 to 138; that span reads DPMLATGGS. Residues Ile193 and 198–200 each bind uracil; that span reads GDA. Asp199 is a 5-phospho-alpha-D-ribose 1-diphosphate binding site.

It belongs to the UPRTase family. Requires Mg(2+) as cofactor.

It carries out the reaction UMP + diphosphate = 5-phospho-alpha-D-ribose 1-diphosphate + uracil. Its pathway is pyrimidine metabolism; UMP biosynthesis via salvage pathway; UMP from uracil: step 1/1. With respect to regulation, allosterically activated by GTP. Catalyzes the conversion of uracil and 5-phospho-alpha-D-ribose 1-diphosphate (PRPP) to UMP and diphosphate. The protein is Uracil phosphoribosyltransferase of Bordetella bronchiseptica (strain ATCC BAA-588 / NCTC 13252 / RB50) (Alcaligenes bronchisepticus).